We begin with the raw amino-acid sequence, 312 residues long: Salivary protein SG34 (312 aa).

A signal peptide spans 1-20 (MSPSKKILVLLLFPILLVSS). Residues 95–158 (NMEVQLLRES…QEEIEEQTKQ (64 aa)) adopt a coiled-coil conformation.

The protein belongs to the salivary protein SG34 family. As to expression, female salivary gland (at protein level). Low-level expression in ovary.

Possible serine protease. Functionally, (Microbial infection) Modulates replication of duck Tembusu virus in salivary glands and virus release into the saliva, probably via the regulation of antimicrobial peptides expression in response to virus infection. In terms of biological role, (Microbial infection) Enhances replication of dengue virus type 2 in human keratinocytes, probably by suppressing the production of type I interferons and antimicrobial peptides in response to virus infection. In Aedes aegypti (Yellowfever mosquito), this protein is Salivary protein SG34.